Consider the following 231-residue polypeptide: Casparian strip membrane protein 1 (231 aa).

Over 1–69 (MSTSETATVI…FRQSDRGSRC (69 aa)) the chain is Cytoplasmic. Residues 70–90 (LAFLDFLLRIAAFGPALAAAI) traverse the membrane as a helical segment. At 91 to 117 (ATGTSDETLSVFTEFFQFRARFDDFPA) the chain is on the extracellular side. Residues 118 to 138 (FLFLMVANAIAAGYLVLSLPF) form a helical membrane-spanning segment. The Cytoplasmic segment spans residues 139-152 (SAVVVLRPQATGLR). A helical transmembrane segment spans residues 153–173 (LLLLVCDTIMIGLLTAAAAAA). Topologically, residues 174–207 (AAIVELAHNGNERANWVAICMQFHGFCQRTSGAV) are extracellular. The helical transmembrane segment at 208–228 (VASFLSVFLFLLLVVLAAFAI) threads the bilayer. Residues 229-231 (RKR) lie on the Cytoplasmic side of the membrane.

Belongs to the Casparian strip membrane proteins (CASP) family. In terms of assembly, homodimer and heterodimers.

It localises to the cell membrane. Functionally, regulates membrane-cell wall junctions and localized cell wall deposition. Required for establishment of the Casparian strip membrane domain (CSD) and the subsequent formation of Casparian strips, a cell wall modification of the root endodermis that determines an apoplastic barrier between the intraorganismal apoplasm and the extraorganismal apoplasm and prevents lateral diffusion. The protein is Casparian strip membrane protein 1 of Brachypodium distachyon (Purple false brome).